Reading from the N-terminus, the 481-residue chain is Matrix metalloproteinase-20 (481 aa).

The first 20 residues, 1-20 (MLPASGLAVLLVTALKFSTA), serve as a signal peptide directing secretion. Positions 21 to 105 (APSLPAASPR…PRCGVPDVAN (85 aa)) are excised as a propeptide. Asn64 is a glycosylation site (N-linked (GlcNAc...) asparagine). A Cysteine switch motif is present at residues 96 to 103 (PRCGVPDV). Position 98 (Cys98) interacts with Zn(2+). 3 residues coordinate Ca(2+): Glu162, Ala163, and Asp164. 2 residues coordinate Zn(2+): His174 and Asp176. Ca(2+)-binding residues include Asp181, Gly182, Arg184, and Thr186. Zn(2+) is bound at residue His189. Ca(2+) contacts are provided by Glu195, Gly196, Gly198, and Asp200. Zn(2+) is bound at residue His202. Ca(2+) contacts are provided by Asp204 and Glu207. His224 is a binding site for Zn(2+). Glu225 is a catalytic residue. Positions 228 and 234 each coordinate Zn(2+). Hemopexin repeat units lie at residues 291 to 341 (PDLC…FPQL), 342 to 387 (MSNV…GFPR), 389 to 437 (VQRI…FSGV), and 438 to 481 (NGQI…WIGC). Cys294 and Cys481 are joined by a disulfide. Residue Asn297 is glycosylated (N-linked (GlcNAc...) asparagine).

The protein belongs to the peptidase M10A family. Zn(2+) is required as a cofactor. The cofactor is Ca(2+). Autoactivates at least at the 105-Asn-|-Tyr-106 site. As to expression, expressed in the enamel organ.

The protein resides in the secreted. The protein localises to the extracellular space. Its subcellular location is the extracellular matrix. Its function is as follows. Degrades amelogenin, the major protein component of the enamel matrix and two of the macromolecules characterizing the cartilage extracellular matrix: aggrecan and the cartilage oligomeric matrix protein (COMP). May play a central role in tooth enamel formation. Cleaves aggrecan at the '360-Ser-|-Phe-361' site. This Bos taurus (Bovine) protein is Matrix metalloproteinase-20 (MMP20).